The chain runs to 389 residues: (2R)-sulfolactate sulfo-lyase subunit beta (389 aa).

This sequence belongs to the UxaA family. (2R)-sulfolactate sulfo-lyase is composed of a SuyA and a SuyB subunit.

Its subcellular location is the cytoplasm. The catalysed reaction is (2R)-3-sulfolactate = sulfite + pyruvate + H(+). Its function is as follows. Together with SuyA, desulfonates sulfolactate to pyruvate and sulfite. This is (2R)-sulfolactate sulfo-lyase subunit beta (suyB) from Chromohalobacter salexigens (strain ATCC BAA-138 / DSM 3043 / CIP 106854 / NCIMB 13768 / 1H11).